A 299-amino-acid polypeptide reads, in one-letter code: Taste receptor type 2 member 4 (299 aa).

The Extracellular segment spans residues 1-9 (MLQLFYFSA). A helical membrane pass occupies residues 10–30 (IIASVILNFVGIIMNLFIMVV). Over 31–46 (NCKTWVKSHRISSSDR) the chain is Cytoplasmic. The chain crosses the membrane as a helical span at residues 47–67 (ILFSLGITRFLMLGLFLVNTI). The Extracellular portion of the chain corresponds to 68–81 (FFVSSNTERSVYLS). A helical membrane pass occupies residues 82 to 102 (AFFVLCFMFXDSSSLWFVTLL). The Cytoplasmic segment spans residues 103 to 131 (NILYCVKITNFQHSVFLLLKQNISPKIPR). A helical transmembrane segment spans residues 132–152 (LLLACVLISAFTTCLYITLSQ). Residues 153–172 (ASPFPELVTKRNNTSFNTHE) are Extracellular-facing. Residues Asn164 and Asn165 are each glycosylated (N-linked (GlcNAc...) asparagine). The helical transmembrane segment at 173–193 (GILSLVVSLVLSSSLQFIINV) threads the bilayer. Residues 194–230 (TSASLLIHSLRRHIQKMQKNATGFWNPQTEAHVGAMK) lie on the Cytoplasmic side of the membrane. Residues 231 to 251 (LMIYFLILYIPYSVATLVQYL) form a helical membrane-spanning segment. Over 252–262 (PFYVGMDMGTK) the chain is Extracellular. The chain crosses the membrane as a helical span at residues 263-283 (AICLIFATLYSPGHSVLIIIT). Over 284-299 (HPKLKTTAKKILCFKK) the chain is Cytoplasmic.

This sequence belongs to the G-protein coupled receptor T2R family.

It is found in the membrane. It localises to the cell projection. Its subcellular location is the cilium membrane. In terms of biological role, gustducin-coupled receptor implicated in the perception of bitter compounds in the oral cavity and the gastrointestinal tract. Signals through PLCB2 and the calcium-regulated cation channel TRPM5. In airway epithelial cells, binding of denatonium increases the intracellular calcium ion concentration and stimulates ciliary beat frequency. The protein is Taste receptor type 2 member 4 (TAS2R4) of Pongo pygmaeus (Bornean orangutan).